We begin with the raw amino-acid sequence, 391 residues long: Small ribosomal subunit protein bS1 (391 aa).

S1 motif domains follow at residues 16–90 (GDKV…LSRR), 108–173 (NEII…LSRK), 194–262 (GDVI…LSIK), and 279–348 (NDVI…LSIK).

Belongs to the bacterial ribosomal protein bS1 family.

Functionally, binds mRNA; thus facilitating recognition of the initiation point. It is needed to translate mRNA with a short Shine-Dalgarno (SD) purine-rich sequence. In Staphylococcus aureus (strain MSSA476), this protein is Small ribosomal subunit protein bS1 (rpsA).